A 492-amino-acid chain; its full sequence is Probable glycogen synthase 2 (492 aa).

Lys-15 contacts ADP-alpha-D-glucose.

Belongs to the glycosyltransferase 1 family. Bacterial/plant glycogen synthase subfamily.

The enzyme catalyses [(1-&gt;4)-alpha-D-glucosyl](n) + ADP-alpha-D-glucose = [(1-&gt;4)-alpha-D-glucosyl](n+1) + ADP + H(+). It participates in glycan biosynthesis; glycogen biosynthesis. Functionally, synthesizes alpha-1,4-glucan chains using ADP-glucose. This is Probable glycogen synthase 2 (glgA2) from Nostoc sp. (strain PCC 7120 / SAG 25.82 / UTEX 2576).